We begin with the raw amino-acid sequence, 437 residues long: Cobyrinate a,c-diamide synthase (437 aa).

Residues 243–433 (IAAIAYDSAF…SHFHFSSARG (191 aa)) enclose the GATase cobBQ-type domain. C324 acts as the Nucleophile in catalysis.

Belongs to the CobB/CbiA family. Requires Mg(2+) as cofactor.

It catalyses the reaction cob(II)yrinate + 2 L-glutamine + 2 ATP + 2 H2O = cob(II)yrinate a,c diamide + 2 L-glutamate + 2 ADP + 2 phosphate + 2 H(+). Its pathway is cofactor biosynthesis; adenosylcobalamin biosynthesis; cob(II)yrinate a,c-diamide from sirohydrochlorin (anaerobic route): step 10/10. In terms of biological role, catalyzes the ATP-dependent amidation of the two carboxylate groups at positions a and c of cobyrinate, using either L-glutamine or ammonia as the nitrogen source. This is Cobyrinate a,c-diamide synthase from Sulfurisphaera tokodaii (strain DSM 16993 / JCM 10545 / NBRC 100140 / 7) (Sulfolobus tokodaii).